A 374-amino-acid polypeptide reads, in one-letter code: ATPase ASNA1 homolog (374 aa).

44 to 51 (KGGVGKTT) is an ATP binding site. Residue aspartate 73 is part of the active site. The ATP site is built by glutamate 244 and asparagine 271.

The protein belongs to the arsA ATPase family. In terms of assembly, homodimer.

It is found in the cytoplasm. The protein resides in the endoplasmic reticulum. Functionally, ATPase required for the post-translational delivery of tail-anchored (TA) proteins to the endoplasmic reticulum. Recognizes and selectively binds the transmembrane domain of TA proteins in the cytosol. This complex then targets to the endoplasmic reticulum by membrane-bound receptors, where the tail-anchored protein is released for insertion. This process is regulated by ATP binding and hydrolysis. ATP binding drives the homodimer towards the closed dimer state, facilitating recognition of newly synthesized TA membrane proteins. ATP hydrolysis is required for insertion. Subsequently, the homodimer reverts towards the open dimer state, lowering its affinity for the membrane-bound receptor, and returning it to the cytosol to initiate a new round of targeting. The protein is ATPase ASNA1 homolog of Plasmodium vivax (strain Salvador I).